The following is a 622-amino-acid chain: Chaperone protein HscA homolog (622 aa).

Belongs to the heat shock protein 70 family.

Chaperone involved in the maturation of iron-sulfur cluster-containing proteins. Has a low intrinsic ATPase activity which is markedly stimulated by HscB. This chain is Chaperone protein HscA homolog, found in Burkholderia lata (strain ATCC 17760 / DSM 23089 / LMG 22485 / NCIMB 9086 / R18194 / 383).